Consider the following 164-residue polypeptide: MD-2-related lipid-recognition protein 3 (164 aa).

An N-terminal signal peptide occupies residues 1–24; that stretch reads MAMSHVQPMLLLLVSLFFLPALRG.

In terms of assembly, interacts with RUB1/NEDD8. Neddylated. Post-translationally, ubiquitinated.

Its subcellular location is the vacuole. It is found in the endoplasmic reticulum. In terms of biological role, may be involved in herbivory-mediated responses. May play a role in herbivory-associated molecular pattern (HAMP) recognition. May function is jasmonate (JA) signaling in response to HAMP. May play a role in defense response against the pathogens Altenaria brassicicola and Pseudomonas syringae. This Arabidopsis thaliana (Mouse-ear cress) protein is MD-2-related lipid-recognition protein 3.